A 98-amino-acid chain; its full sequence is NADH-ubiquinone oxidoreductase chain 4L (98 aa).

3 helical membrane-spanning segments follow: residues 1–21, 29–49, and 61–81; these read MTLVYMNMALAFTISLLGLLM, SLLCLEGMMLSLFVTMAVTIL, and IILLVFAACEAALGLSLLVMV.

This sequence belongs to the complex I subunit 4L family. In terms of assembly, core subunit of respiratory chain NADH dehydrogenase (Complex I) which is composed of 45 different subunits.

It localises to the mitochondrion inner membrane. The enzyme catalyses a ubiquinone + NADH + 5 H(+)(in) = a ubiquinol + NAD(+) + 4 H(+)(out). Its function is as follows. Core subunit of the mitochondrial membrane respiratory chain NADH dehydrogenase (Complex I) which catalyzes electron transfer from NADH through the respiratory chain, using ubiquinone as an electron acceptor. Part of the enzyme membrane arm which is embedded in the lipid bilayer and involved in proton translocation. The polypeptide is NADH-ubiquinone oxidoreductase chain 4L (MT-ND4L) (Rousettus aegyptiacus (Egyptian fruit bat)).